We begin with the raw amino-acid sequence, 278 residues long: GRGNSIKHLRHENIISLLDVFISPGEDIYFITELLGTDLHRLLSSRPLERQFVQYFLYQMLRALKFVHPAGVVHRDLKPSNILINENCDLKICDFGLARLQDPQMTGYVSTRYYRAPEIMLTWQEYDSAVDIWSIGCIFAEMIDGRPIFPGKDHVHQLTVITELLGSPPEDVINTITSENTRRFVDALPKREKIPFQQRFPNANEEEIDLLEKMLDFNPKERITAADAIQHPYLAPYHDPSDEPVANERFDWSFNDADLPVDQWKVMMYSEILITSEF.

The region spanning 1–234 (GRGNSIKHLR…AADAIQHPYL (234 aa)) is the Protein kinase domain. Residue Thr106 is modified to Phosphothreonine. The TXY signature appears at 106-108 (TGY). Residue Tyr108 is modified to Phosphotyrosine.

It belongs to the protein kinase superfamily. Ser/Thr protein kinase family. MAP kinase subfamily. HOG1 sub-subfamily. Requires Mg(2+) as cofactor. Dually phosphorylated on Thr-106 and Tyr-108, which activates the enzyme.

The protein resides in the cytoplasm. It localises to the nucleus. The enzyme catalyses L-seryl-[protein] + ATP = O-phospho-L-seryl-[protein] + ADP + H(+). It carries out the reaction L-threonyl-[protein] + ATP = O-phospho-L-threonyl-[protein] + ADP + H(+). With respect to regulation, activated by tyrosine and threonine phosphorylation. Functionally, proline-directed serine/threonine-protein kinase involved in a signal transduction pathway that is activated by changes in the osmolarity of the extracellular environment. Controls osmotic regulation of transcription of target genes. The protein is Mitogen-activated protein kinase HOG1 (HOG1) of Wallemia muriae.